The chain runs to 808 residues: Phenylalanine--tRNA ligase beta subunit (808 aa).

The tRNA-binding domain occupies 40–149 (RPELDFVKIV…DQAEVGKTIR (110 aa)). One can recognise a B5 domain in the interval 407–484 (HKEVRIHTDI…RTKGYDTIQV (78 aa)). The Mg(2+) site is built by Asp462, Asp468, Glu471, and Glu472. The FDX-ACB domain occupies 716–808 (SQFPEAEIDL…LAGKNGFVLR (93 aa)).

Belongs to the phenylalanyl-tRNA synthetase beta subunit family. Type 1 subfamily. Tetramer of two alpha and two beta subunits. It depends on Mg(2+) as a cofactor.

Its subcellular location is the cytoplasm. The enzyme catalyses tRNA(Phe) + L-phenylalanine + ATP = L-phenylalanyl-tRNA(Phe) + AMP + diphosphate + H(+). The protein is Phenylalanine--tRNA ligase beta subunit of Leptospira interrogans serogroup Icterohaemorrhagiae serovar Lai (strain 56601).